A 166-amino-acid polypeptide reads, in one-letter code: Large ribosomal subunit protein uL10 (166 aa).

The protein belongs to the universal ribosomal protein uL10 family. As to quaternary structure, part of the ribosomal stalk of the 50S ribosomal subunit. The N-terminus interacts with L11 and the large rRNA to form the base of the stalk. The C-terminus forms an elongated spine to which L12 dimers bind in a sequential fashion forming a multimeric L10(L12)X complex.

Forms part of the ribosomal stalk, playing a central role in the interaction of the ribosome with GTP-bound translation factors. The chain is Large ribosomal subunit protein uL10 from Shouchella clausii (strain KSM-K16) (Alkalihalobacillus clausii).